The chain runs to 170 residues: Lipoprotein signal peptidase (170 aa).

4 consecutive transmembrane segments (helical) span residues 11–31, 41–61, 69–89, and 95–115; these read LGWL…KAHF, IVVI…AAFS, WQRW…VVWL, and DDTW…GNLY. Active-site residues include Asp125 and Asp144. A helical membrane pass occupies residues 136 to 156; that stretch reads YFPAFNFADSAITVGAIMLAL.

It belongs to the peptidase A8 family.

It localises to the cell inner membrane. The enzyme catalyses Release of signal peptides from bacterial membrane prolipoproteins. Hydrolyzes -Xaa-Yaa-Zaa-|-(S,diacylglyceryl)Cys-, in which Xaa is hydrophobic (preferably Leu), and Yaa (Ala or Ser) and Zaa (Gly or Ala) have small, neutral side chains.. It participates in protein modification; lipoprotein biosynthesis (signal peptide cleavage). This protein specifically catalyzes the removal of signal peptides from prolipoproteins. This Pseudomonas fluorescens protein is Lipoprotein signal peptidase.